The primary structure comprises 358 residues: Alanine racemase (358 aa).

K35 serves as the catalytic Proton acceptor; specific for D-alanine. K35 bears the N6-(pyridoxal phosphate)lysine mark. R130 is a binding site for substrate. Y255 serves as the catalytic Proton acceptor; specific for L-alanine. M303 serves as a coordination point for substrate.

The protein belongs to the alanine racemase family. The cofactor is pyridoxal 5'-phosphate.

It catalyses the reaction L-alanine = D-alanine. It participates in amino-acid biosynthesis; D-alanine biosynthesis; D-alanine from L-alanine: step 1/1. Functionally, catalyzes the interconversion of L-alanine and D-alanine. May also act on other amino acids. The sequence is that of Alanine racemase (alr) from Shewanella sediminis (strain HAW-EB3).